Consider the following 352-residue polypeptide: MVFRIASSPYTHNQRQTSRIMLLVLLAAVPGIAAQLWFFGWGTLVQILLASVSALLAEALVLKLRKQSVAATLKDNSALLTGLLLAVSIPPLAPWWMVVLGTVFAVIIAKQLYGGLGQNPFNPAMIGYVVLLISFPVQMTSWLPPHEIAVNIPGFIDAIQVIFSGHTASGGDMNTLRLGIDGISQATPLDTFKTSVRAGHSVEQIMQYPIYSGILAGAGWQWVNLAWLAGGLWLLWQKAIRWHIPLSFLVTLALCATLGWLFSPETLAAPQIHLLSGATMLGAFFILTDPVTASTTNRGRLIFGALAGLLVWLIRSFGGYPDGVAFAVLLANITVPLIDYYTRPRVYGHRKG.

5 helical membrane-spanning segments follow: residues 20 to 40 (IMLL…WFFG), 42 to 62 (GTLV…ALVL), 78 to 109 (ALLT…VIIA), 123 to 143 (PAMI…TSWL), and 148 to 168 (IAVN…GHTA). Threonine 187 is modified (FMN phosphoryl threonine). 5 consecutive transmembrane segments (helical) span residues 214–234 (ILAG…GLWL), 242–262 (WHIP…GWLF), 267–287 (LAAP…FFIL), 301–321 (LIFG…GGYP), and 322–342 (DGVA…DYYT).

It belongs to the NqrB/RnfD family. As to quaternary structure, the complex is composed of six subunits: RsxA, RsxB, RsxC, RsxD, RsxE and RsxG. The cofactor is FMN.

Its subcellular location is the cell inner membrane. Its function is as follows. Part of a membrane-bound complex that couples electron transfer with translocation of ions across the membrane. Required to maintain the reduced state of SoxR. This Escherichia coli (strain SE11) protein is Ion-translocating oxidoreductase complex subunit D.